We begin with the raw amino-acid sequence, 432 residues long: Glutamate-1-semialdehyde 2,1-aminomutase 1 (432 aa).

Lys-268 is modified (N6-(pyridoxal phosphate)lysine).

This sequence belongs to the class-III pyridoxal-phosphate-dependent aminotransferase family. HemL subfamily. In terms of assembly, homodimer. The cofactor is pyridoxal 5'-phosphate.

The protein resides in the cytoplasm. It carries out the reaction (S)-4-amino-5-oxopentanoate = 5-aminolevulinate. It functions in the pathway porphyrin-containing compound metabolism; protoporphyrin-IX biosynthesis; 5-aminolevulinate from L-glutamyl-tRNA(Glu): step 2/2. This chain is Glutamate-1-semialdehyde 2,1-aminomutase 1, found in Bacillus cereus (strain ZK / E33L).